A 148-amino-acid chain; its full sequence is IQ domain-containing protein F5 (148 aa).

IQ domains follow at residues 11–40 (ETSAAVRIQAWWRGTLLRRTLLHAALSAWI) and 67–96 (KTWAIVKLQSWFRMWHIRHRYCRLLNAVRI).

The sequence is that of IQ domain-containing protein F5 (Iqcf5) from Mus musculus (Mouse).